Consider the following 89-residue polypeptide: Small ribosomal subunit protein uS17 (89 aa).

This sequence belongs to the universal ribosomal protein uS17 family. Part of the 30S ribosomal subunit.

Its function is as follows. One of the primary rRNA binding proteins, it binds specifically to the 5'-end of 16S ribosomal RNA. The polypeptide is Small ribosomal subunit protein uS17 (Baumannia cicadellinicola subsp. Homalodisca coagulata).